The primary structure comprises 490 residues: Calcium-dependent protein kinase 12 (490 aa).

The Protein kinase domain occupies 22-280; that stretch reads YFLGQVLGQG…AHQVLCHPWI (259 aa). ATP is bound by residues 28 to 36 and Lys51; that span reads LGQGQFGTT. Asp146 acts as the Proton acceptor in catalysis. Phosphoserine is present on Ser186. The tract at residues 286–316 is autoinhibitory domain; that stretch reads APDKPLDCAVVSRLKKFSAMNKLKKMALRVI. EF-hand domains lie at 323–358, 359–394, 395–430, and 434–464; these read EEIG…VGSE, LMES…LNKL, EREE…FGIN, and LDEM…GNGT. Ca(2+)-binding residues include Asp336, Asp338, Ser340, Thr342, Glu347, Asp372, Asp374, Ser376, Thr378, Glu383, Asp408, Asp410, Ser412, Tyr414, Glu419, Asp442, Asp444, Asp446, Gln448, and Glu453.

It belongs to the protein kinase superfamily. Ser/Thr protein kinase family. CDPK subfamily. As to quaternary structure, interacts weakly with DI19. Ubiquitously expressed.

The enzyme catalyses L-seryl-[protein] + ATP = O-phospho-L-seryl-[protein] + ADP + H(+). It catalyses the reaction L-threonyl-[protein] + ATP = O-phospho-L-threonyl-[protein] + ADP + H(+). With respect to regulation, activated by calcium. Autophosphorylation may play an important role in the regulation of the kinase activity. In terms of biological role, may play a role in signal transduction pathways that involve calcium as a second messenger. The protein is Calcium-dependent protein kinase 12 (CPK12) of Arabidopsis thaliana (Mouse-ear cress).